Reading from the N-terminus, the 258-residue chain is Type III pantothenate kinase (258 aa).

6-13 (DVGNTNIV) contacts ATP. Substrate contacts are provided by residues Tyr-100 and 107–110 (GADR). Asp-109 functions as the Proton acceptor in the catalytic mechanism. Asp-129 provides a ligand contact to K(+). Thr-132 is an ATP binding site. Thr-184 contributes to the substrate binding site.

Belongs to the type III pantothenate kinase family. Homodimer. NH4(+) serves as cofactor. K(+) is required as a cofactor.

The protein resides in the cytoplasm. The enzyme catalyses (R)-pantothenate + ATP = (R)-4'-phosphopantothenate + ADP + H(+). It functions in the pathway cofactor biosynthesis; coenzyme A biosynthesis; CoA from (R)-pantothenate: step 1/5. Catalyzes the phosphorylation of pantothenate (Pan), the first step in CoA biosynthesis. The protein is Type III pantothenate kinase of Desulfitobacterium hafniense (strain DSM 10664 / DCB-2).